Reading from the N-terminus, the 155-residue chain is Large ribosomal subunit protein uL30 (155 aa).

Belongs to the universal ribosomal protein uL30 family. In terms of assembly, part of the 50S ribosomal subunit.

The chain is Large ribosomal subunit protein uL30 from Cenarchaeum symbiosum (strain A).